Consider the following 226-residue polypeptide: MPKGPVVIKVSGKYVNPEKPGLVKRYAQVLHELHSVGYRLVVVVGGGPEARRYIEAARELGLGKSFQDILGIEASRLNARLLIYALHPNAYPEPPRSIWELLEAYSTGLIVVAGGFQPGQSTSGVAALVAEAIGAELLVLATTVDGVYTADPAVDKSAQLIPRLSYEEFRRVVRQSMSPGRYELLDPVAISIVERSNIPVRVVNGSDPENVKRVVLGEELGSLITG.

Residue 9-13 (KVSGK) participates in ATP binding. Residue G46 participates in UMP binding. Residues G47 and R51 each contribute to the ATP site. UMP-binding positions include D68 and 116–122 (FQPGQST). ATP is bound by residues T142, Y148, and D151.

The protein belongs to the UMP kinase family. In terms of assembly, homohexamer.

Its subcellular location is the cytoplasm. The enzyme catalyses UMP + ATP = UDP + ADP. It functions in the pathway pyrimidine metabolism; CTP biosynthesis via de novo pathway; UDP from UMP (UMPK route): step 1/1. Its activity is regulated as follows. Inhibited by UTP. Catalyzes the reversible phosphorylation of UMP to UDP. The polypeptide is Uridylate kinase (Hyperthermus butylicus (strain DSM 5456 / JCM 9403 / PLM1-5)).